The sequence spans 403 residues: Na(+)/H(+) antiporter NhaH (403 aa).

A run of 12 helical transmembrane segments spans residues 7–27, 34–54, 99–119, 125–145, 168–188, 196–216, 228–245, 250–272, 282–302, 311–331, 345–365, and 373–393; these read VFIQ…IAKL, VALV…IEEA, LAFL…YFLL, VAFT…LSIF, IAVV…EMGW, FMFL…GYVF, LEVA…FIAE, SGVI…IGMS, FWDS…GLEI, WGYI…AVYI, ILIN…LSLP, and QVLL…GLTL.

It belongs to the monovalent cation:proton antiporter 1 (CPA1) transporter (TC 2.A.36) family.

The protein resides in the cell membrane. Na(+)/H(+) antiporter that extrudes sodium in exchange for external protons. Can also transport lithium. The protein is Na(+)/H(+) antiporter NhaH (nhaH) of Halobacillus aidingensis.